We begin with the raw amino-acid sequence, 128 residues long: Ribonuclease P protein component (128 aa).

It belongs to the RnpA family. In terms of assembly, consists of a catalytic RNA component (M1 or rnpB) and a protein subunit.

It carries out the reaction Endonucleolytic cleavage of RNA, removing 5'-extranucleotides from tRNA precursor.. RNaseP catalyzes the removal of the 5'-leader sequence from pre-tRNA to produce the mature 5'-terminus. It can also cleave other RNA substrates such as 4.5S RNA. The protein component plays an auxiliary but essential role in vivo by binding to the 5'-leader sequence and broadening the substrate specificity of the ribozyme. This Rhizobium meliloti (strain 1021) (Ensifer meliloti) protein is Ribonuclease P protein component.